Here is a 292-residue protein sequence, read N- to C-terminus: Ribosomal protein L11 methyltransferase (292 aa).

S-adenosyl-L-methionine contacts are provided by Thr144, Gly165, Asp187, and Asn229.

It belongs to the methyltransferase superfamily. PrmA family.

The protein localises to the cytoplasm. It catalyses the reaction L-lysyl-[protein] + 3 S-adenosyl-L-methionine = N(6),N(6),N(6)-trimethyl-L-lysyl-[protein] + 3 S-adenosyl-L-homocysteine + 3 H(+). Methylates ribosomal protein L11. This chain is Ribosomal protein L11 methyltransferase, found in Azotobacter vinelandii (strain DJ / ATCC BAA-1303).